A 187-amino-acid chain; its full sequence is Probable nicotinate-nucleotide adenylyltransferase (187 aa).

This sequence belongs to the NadD family.

It carries out the reaction nicotinate beta-D-ribonucleotide + ATP + H(+) = deamido-NAD(+) + diphosphate. It participates in cofactor biosynthesis; NAD(+) biosynthesis; deamido-NAD(+) from nicotinate D-ribonucleotide: step 1/1. In terms of biological role, catalyzes the reversible adenylation of nicotinate mononucleotide (NaMN) to nicotinic acid adenine dinucleotide (NaAD). This chain is Probable nicotinate-nucleotide adenylyltransferase, found in Anaeromyxobacter sp. (strain K).